The primary structure comprises 532 residues: Bone morphogenetic protein receptor type-1A (532 aa).

An N-terminal signal peptide occupies residues 1 to 23 (MPQLYIYIRLLGAYLFIISRVQG). Residues 24-152 (QNLDSMLHGT…IGPFFDGSIR (129 aa)) are Extracellular-facing. Cystine bridges form between Cys-61-Cys-82, Cys-63-Cys-67, and Cys-76-Cys-100. Asn-73 carries N-linked (GlcNAc...) asparagine glycosylation. Positions 107–109 (DFQ) are mediates specificity for BMP ligand. 2 cysteine pairs are disulfide-bonded: Cys-110–Cys-124 and Cys-125–Cys-130. Residues 153 to 176 (WLVLLISMAVCIIAMIIFSSCFCY) traverse the membrane as a helical segment. Residues 177-532 (KHYCKSISSR…KMVESQDVKI (356 aa)) lie on the Cytoplasmic side of the membrane. The region spanning 204–233 (ESLKDLIDQSQSSGSGSGLPLLVQRTIAKQ) is the GS domain. Positions 234–525 (IQMVRQVGKG…RIKKTLAKMV (292 aa)) constitute a Protein kinase domain. Residues 240–248 (VGKGRYGEV) and Lys-261 contribute to the ATP site. Asp-362 functions as the Proton acceptor in the catalytic mechanism.

The protein belongs to the protein kinase superfamily. TKL Ser/Thr protein kinase family. TGFB receptor subfamily. As to quaternary structure, interacts with low affinity with GDF5; positively regulates chondrocyte differentiation. Interacts with BMP4. Interacts with SCUBE3. Interacts with TSC22D1/TSC-22. Interacts with BMP2; the interaction may induce HAMP expression. Interacts with BMP6. Interacts with heterodimers composed of BMP2 and BMP6 in vitro; the interaction may induce HAMP expression. Interacts with TGFBR3. Requires Mg(2+) as cofactor. It depends on Mn(2+) as a cofactor. In terms of processing, glycosylated. In terms of tissue distribution, highly expressed in skeletal muscle.

The protein resides in the cell membrane. The protein localises to the cell surface. It catalyses the reaction L-threonyl-[receptor-protein] + ATP = O-phospho-L-threonyl-[receptor-protein] + ADP + H(+). The catalysed reaction is L-seryl-[receptor-protein] + ATP = O-phospho-L-seryl-[receptor-protein] + ADP + H(+). Its function is as follows. On ligand binding, forms a receptor complex consisting of two type II and two type I transmembrane serine/threonine kinases. Type II receptors phosphorylate and activate type I receptors which autophosphorylate, then bind and activate SMAD transcriptional regulators. Receptor for BMP2, BMP4, GDF5 and GDF6. Positively regulates chondrocyte differentiation through GDF5 interaction. Mediates induction of adipogenesis by GDF6. May promote the expression of HAMP, potentially via its interaction with BMP2. This Homo sapiens (Human) protein is Bone morphogenetic protein receptor type-1A (BMPR1A).